We begin with the raw amino-acid sequence, 660 residues long: Tripartite terminase subunit 3 (660 aa).

The Walker A motif signature appears at 203–210; sequence VPRRHGKT. The Walker B motif signature appears at 294-299; the sequence is ILLVDE. Glu-299 acts as the For ATPase activity in catalysis. Residues Asp-452, Glu-523, and Asp-637 each act as for nuclease activity in the active site.

It belongs to the herpesviridae TRM3 protein family. As to quaternary structure, interacts with the terminase subunits TRM1 and TRM2. Interacts with portal protein.

It localises to the host nucleus. Its function is as follows. Component of the molecular motor that translocates viral genomic DNA in empty capsid during DNA packaging. Forms a tripartite terminase complex together with TRM1 and TRM2 in the host cytoplasm. Once the complex reaches the host nucleus, it interacts with the capsid portal vertex. This portal forms a ring in which genomic DNA is translocated into the capsid. TRM3 carries an RNase H-like nuclease activity that plays an important role for the cleavage of concatemeric viral DNA into unit length genomes. The sequence is that of Tripartite terminase subunit 3 from Elephas maximus (Indian elephant).